The sequence spans 353 residues: Guanine nucleotide-binding protein G(q) subunit alpha (353 aa).

S-palmitoyl cysteine attachment occurs at residues Cys3 and Cys4. Positions 32–353 (RELKLLLLGT…QLNLKEYNLV (322 aa)) constitute a G-alpha domain. Positions 35-48 (KLLLLGTGESGKST) are G1 motif. Residues 40 to 47 (GTGESGKS), 174 to 180 (LRVRVPT), 199 to 203 (DVGGQ), 268 to 271 (NKKD), and Ala325 contribute to the GTP site. Residues Ser47 and Thr180 each coordinate Mg(2+). The segment at 172–180 (DILRVRVPT) is G2 motif. Residues 195–204 (FRMVDVGGQR) form a G3 motif region. Residues 264–271 (ILFLNKKD) are G4 motif. The tract at residues 323–328 (TCATDT) is G5 motif.

It belongs to the G-alpha family. G(q) subfamily. In terms of assembly, g proteins are composed of 3 units; alpha, beta and gamma. The alpha chain contains the guanine nucleotide binding site.

Guanine nucleotide-binding proteins (G proteins) are involved as modulators or transducers in various transmembrane signaling systems. The sequence is that of Guanine nucleotide-binding protein G(q) subunit alpha (SCGQA) from Mizuhopecten yessoensis (Japanese scallop).